Here is a 391-residue protein sequence, read N- to C-terminus: DNA-directed RNA polymerase I subunit RPA43 (391 aa).

2 disordered regions span residues 1 to 27 and 220 to 391; these read MANWTQEDGAPTPVTNPSEVSQVSGGS and QKQV…KKSK. The span at 288-299 shows a compositional bias: basic residues; that stretch reads GRHKEKKKKKKR. Residues 289–353 adopt a coiled-coil conformation; the sequence is RHKEKKKKKK…RDKQQDSAEI (65 aa). Residues 312-323 are compositionally biased toward polar residues; the sequence is MNNNSLQETALD. The segment covering 336-345 has biased composition (basic residues); sequence KEKKKKKKRD.

It belongs to the eukaryotic RPA43 RNA polymerase subunit family. As to quaternary structure, component of the RNA polymerase I (Pol I) complex consisting of at least 13 subunits.

The protein resides in the nucleus. The protein localises to the nucleolus. Functionally, DNA-dependent RNA polymerase catalyzes the transcription of DNA into RNA using the four ribonucleoside triphosphates as substrates. Component of RNA polymerase I which synthesizes ribosomal RNA precursors. May be involved in recruitment of Pol I to rDNA promoters. The sequence is that of DNA-directed RNA polymerase I subunit RPA43 from Danio rerio (Zebrafish).